The following is a 204-amino-acid chain: Cytochrome b6 (204 aa).

The chain crosses the membrane as a helical span at residues 23-43; the sequence is YCLGGITLTSFLVQVATGSAM. Residue C24 participates in heme c binding. The heme b site is built by H75 and H89. 3 consecutive transmembrane segments (helical) span residues 81 to 101, 107 to 127, and 136 to 157; these read MMVL…GFKK, WVTG…GYSL, and AVKI…LVEL. H176 and H191 together coordinate heme b. The helical transmembrane segment at 177-197 threads the bilayer; the sequence is TFILPLLTAVFMPMHFLMIRK.

It belongs to the cytochrome b family. PetB subfamily. As to quaternary structure, the 4 large subunits of the cytochrome b6-f complex are cytochrome b6, subunit IV (17 kDa polypeptide, PetD), cytochrome f and the Rieske protein, while the 4 small subunits are PetG, PetL, PetM and PetN. The complex functions as a dimer. Requires heme b as cofactor. It depends on heme c as a cofactor.

Its subcellular location is the plastid. The protein resides in the chloroplast thylakoid membrane. Its function is as follows. Component of the cytochrome b6-f complex, which mediates electron transfer between photosystem II (PSII) and photosystem I (PSI), cyclic electron flow around PSI, and state transitions. The polypeptide is Cytochrome b6 (Picea abies (Norway spruce)).